The primary structure comprises 362 residues: Chorismate synthase (362 aa).

NADP(+) contacts are provided by R48 and R54. FMN-binding positions include 131–133 (RSS), 243–244 (NA), G287, 302–306 (KPTSS), and R328.

The protein belongs to the chorismate synthase family. As to quaternary structure, homotetramer. FMNH2 serves as cofactor.

It carries out the reaction 5-O-(1-carboxyvinyl)-3-phosphoshikimate = chorismate + phosphate. It functions in the pathway metabolic intermediate biosynthesis; chorismate biosynthesis; chorismate from D-erythrose 4-phosphate and phosphoenolpyruvate: step 7/7. Catalyzes the anti-1,4-elimination of the C-3 phosphate and the C-6 proR hydrogen from 5-enolpyruvylshikimate-3-phosphate (EPSP) to yield chorismate, which is the branch point compound that serves as the starting substrate for the three terminal pathways of aromatic amino acid biosynthesis. This reaction introduces a second double bond into the aromatic ring system. The protein is Chorismate synthase of Rhodopseudomonas palustris (strain ATCC BAA-98 / CGA009).